Reading from the N-terminus, the 80-residue chain is Toxin Acra I-3 (80 aa).

The first 22 residues, 1–22 (MMKLVLLSVIVILFSLIGSIHG), serve as a signal peptide directing secretion. The LCN-type CS-alpha/beta domain occupies 25 to 80 (VPGNYPLDSSGNKYPCTVLGDNQSCIDVCKKHGVKYGYCYGFKCWCEYLKDKNVSL). 3 disulfide bridges follow: Cys-40–Cys-63, Cys-49–Cys-68, and Cys-53–Cys-70.

The protein belongs to the long (3 C-C) scorpion toxin superfamily. Sodium/Potassium channel inhibitor family. As to expression, expressed by the venom gland.

The protein localises to the secreted. Functionally, probable neurotoxin that inhibits ion channels. Is toxic to mice. The polypeptide is Toxin Acra I-3 (Androctonus crassicauda (Arabian fat-tailed scorpion)).